The following is a 71-amino-acid chain: MARRKRICRFTAEGVKEIDYKDLETLKAYITEVGKIVPARITGTNVFYQRQLATAVKRARFLALLPYTDQH.

Belongs to the bacterial ribosomal protein bS18 family. In terms of assembly, part of the 30S ribosomal subunit. Forms a tight heterodimer with protein bS6.

In terms of biological role, binds as a heterodimer with protein bS6 to the central domain of the 16S rRNA, where it helps stabilize the platform of the 30S subunit. The protein is Small ribosomal subunit protein bS18 of Dichelobacter nodosus (strain VCS1703A).